The primary structure comprises 377 residues: MTQEPFREELAYDRMPTLERGRQDPASYAPDAKPSDLQLSKRLPPCFSHKTWVFSVLMGSCLLVTSGFSLYLGNVFPAEMDYLRCAAGSCIPSAIVSFTVSRRNANVIPNFQILFVSTFAVTTTCLIWFGCKLVLNPSAININFNLILLLLLELLMAATVIIAARSSEEDCKKKKGSMSDSANILDEVPFPARVLKSYSVVEVIAGISAVLGGIIALNVDDSVSGPHLSVTFFWILVACFPSAIASHVAAECPSKCLVEVLIAISSLTSPLLFTASGYLSFSIMRIVEMFKDYPPAIKPSYDVLLLLLLLVLLLQAGLNTGTAIQCVRFKVSARLQGASWDTQNGPQERLAGEVARSPLKEFDKEKAWRAVVVQMAQ.

The span at 1-23 (MTQEPFREELAYDRMPTLERGRQ) shows a compositional bias: basic and acidic residues. Positions 1–36 (MTQEPFREELAYDRMPTLERGRQDPASYAPDAKPSD) are disordered. The next 4 membrane-spanning stretches (helical) occupy residues 52–72 (WVFS…SLYL), 82–100 (YLRC…SFTV), 111–131 (FQIL…WFGC), and 144–164 (FNLI…IIAA). 2 positions are modified to phosphoserine: serine 177 and serine 179. Transmembrane regions (helical) follow at residues 199 to 219 (SVVE…ALNV), 230 to 250 (VTFF…HVAA), 257 to 277 (LVEV…TASG), and 304 to 324 (LLLL…GTAI).

Interacts with ATP1B1. Part of a complex containing ATP1B1, TRPV4, AQP4 and HEPACAM. Expressed in the brain, with highest levels found in the amygdala, nucleus caudatus, thalamus and hippocampus.

Its subcellular location is the membrane. It is found in the cell membrane. The protein resides in the cytoplasm. It localises to the perinuclear region. The protein localises to the endoplasmic reticulum. Its function is as follows. Transmembrane protein mainly expressed in brain astrocytes that may play a role in transport across the blood-brain and brain-cerebrospinal fluid barriers. Regulates the response of astrocytes to hypo-osmosis by promoting calcium influx. May function as regulatory protein of membrane protein complexes such as ion channels. The chain is Membrane protein MLC1 from Homo sapiens (Human).